The primary structure comprises 160 residues: Probable nucleoside diphosphate kinase DDB_G0292928 (160 aa).

Positions 12, 61, 103, 109, 122, and 132 each coordinate ATP. The Pros-phosphohistidine intermediate role is filled by His135.

It belongs to the NDK family. The cofactor is Mg(2+).

The catalysed reaction is a 2'-deoxyribonucleoside 5'-diphosphate + ATP = a 2'-deoxyribonucleoside 5'-triphosphate + ADP. The enzyme catalyses a ribonucleoside 5'-diphosphate + ATP = a ribonucleoside 5'-triphosphate + ADP. This chain is Probable nucleoside diphosphate kinase DDB_G0292928, found in Dictyostelium discoideum (Social amoeba).